We begin with the raw amino-acid sequence, 896 residues long: NEDD4-binding protein 1 (896 aa).

The region spanning 59–143 (QEAVHSAKEY…IQQFVKLFEN (85 aa)) is the KH-like domain. Position 226 is a phosphoserine (serine 226). A Phosphothreonine modification is found at threonine 242. Phosphoserine is present on residues serine 258 and serine 300. Disordered stretches follow at residues 403 to 430 (YPET…PKKT) and 488 to 507 (ETDG…VNFV). A compositionally biased stretch (polar residues) spans 414-430 (VYSSTNELTTDSTPKKT). A Phosphoserine modification is found at serine 562. Residues 617–769 (LKHIVIDGSN…LGRSGPRLEE (153 aa)) form the RNase NYN domain. The disordered stretch occupies residues 801-821 (GTQAASTSHQPPTRIQGAPSS). Positions 803–813 (QAASTSHQPPT) are enriched in polar residues. The coCUN stretch occupies residues 849–896 (RSSAETNELREALLKIFPDSEQRLKIDQILVAHPYMKDLNALSAMVLD).

It belongs to the N4BP1 family. As to quaternary structure, interacts with NEDD4. Interacts with ITCH (via WW domain 2). In terms of processing, proteolytically cleaved by CASP8 downstream of TLR3 or TLR4, leading to its inactivation. Mainly cleaved at Asp-490 by CASP8. Cleaved by caspase-like protein MALT1 in T-cells following TCR-mediated activation, leading to its inactivation and subsequent viral reactivation during HIV-1 infection. Post-translationally, mono- and polyubiquitinated on the CoCUN region. Monoubiquitinated by NEDD4. Polyubiquitinated, leading to its degradation by the proteasome. Sumoylated with SUMO1, abrogating polyubiquitination and subsequent degradation. Desumoylated by SENP1, leading to accumulation in PML nuclear bodies. As to expression, detected in heart, lung, brain, liver, skeletal muscle, pancreas, kidney, spleen, testis and ovary.

It localises to the cytoplasm. The protein localises to the cytosol. It is found in the nucleus. Its subcellular location is the nucleolus. The protein resides in the PML body. With respect to regulation, proteolytic cleavage by CASP8 or MALT1 leads to its inactivation. Its function is as follows. Potent suppressor of cytokine production that acts as a regulator of innate immune signaling and inflammation. Acts as a key negative regulator of select cytokine and chemokine responses elicited by TRIF-independent Toll-like receptors (TLRs), thereby limiting inflammatory cytokine responses to minor insults. In response to more threatening pathogens, cleaved by CASP8 downstream of TLR3 or TLR4, leading to its inactivation, thereby allowing production of inflammatory cytokines. Acts as a restriction factor against some viruses, such as HIV-1: restricts HIV-1 replication by binding to HIV-1 mRNAs and mediating their degradation via its ribonuclease activity. Also acts as an inhibitor of the E3 ubiquitin-protein ligase ITCH: acts by interacting with the second WW domain of ITCH, leading to compete with ITCH's substrates and impairing ubiquitination of substrates. The polypeptide is NEDD4-binding protein 1 (Homo sapiens (Human)).